A 179-amino-acid chain; its full sequence is Macro domain-containing protein XAC3343 (179 aa).

Positions 1–175 constitute a Macro domain; it reads MRIEVWQGDI…AYQQALATQE (175 aa).

Belongs to the MacroD-type family.

The chain is Macro domain-containing protein XAC3343 from Xanthomonas axonopodis pv. citri (strain 306).